A 153-amino-acid polypeptide reads, in one-letter code: Large-conductance mechanosensitive channel (153 aa).

A run of 2 helical transmembrane segments spans residues 16–36 (VIDLAVGVVIGGAFGSIVKSL) and 88–108 (GLFINALVSFTIVAFAIFMLV).

Belongs to the MscL family. In terms of assembly, homopentamer.

The protein localises to the cell inner membrane. Functionally, channel that opens in response to stretch forces in the membrane lipid bilayer. May participate in the regulation of osmotic pressure changes within the cell. The polypeptide is Large-conductance mechanosensitive channel (Chromobacterium violaceum (strain ATCC 12472 / DSM 30191 / JCM 1249 / CCUG 213 / NBRC 12614 / NCIMB 9131 / NCTC 9757 / MK)).